A 335-amino-acid polypeptide reads, in one-letter code: Cathepsin B (335 aa).

The N-terminal stretch at 1–17 (MWRLLATLSCLLVLTSA) is a signal peptide. A propeptide spans 18-79 (RSSLYFPPLS…QRDAFAADVV (62 aa)) (activation peptide). 6 disulfides stabilise this stretch: Cys-93-Cys-122, Cys-105-Cys-150, Cys-141-Cys-207, Cys-142-Cys-146, Cys-179-Cys-211, and Cys-187-Cys-198. The active site involves Cys-108. Asn-192 is a glycosylation site (N-linked (GlcNAc...) asparagine). The residue at position 220 (Lys-220) is an N6-acetyllysine. A disulfide bridge links Cys-227 with Cys-331. Active-site residues include His-278 and Asn-298. A propeptide spanning residues 333–335 (HQY) is cleaved from the precursor.

Belongs to the peptidase C1 family. As to quaternary structure, dimer of a heavy chain and a light chain cross-linked by a disulfide bond. Interacts with SRPX2. Directly interacts with SHKBP1. In terms of tissue distribution, expressed in myoblasts, the myotube, fibroblasts and fetal muscle (at protein level). Expressed in the spleen (at protein level).

Its subcellular location is the lysosome. The protein resides in the melanosome. It localises to the secreted. The protein localises to the extracellular space. It is found in the apical cell membrane. It carries out the reaction Hydrolysis of proteins with broad specificity for peptide bonds. Preferentially cleaves -Arg-Arg-|-Xaa bonds in small molecule substrates (thus differing from cathepsin L). In addition to being an endopeptidase, shows peptidyl-dipeptidase activity, liberating C-terminal dipeptides.. Its function is as follows. Thiol protease which is believed to participate in intracellular degradation and turnover of proteins. Cleaves matrix extracellular phosphoglycoprotein MEPE. Involved in the solubilization of cross-linked TG/thyroglobulin in the thyroid follicle lumen. Has also been implicated in tumor invasion and metastasis. The chain is Cathepsin B (CTSB) from Bos taurus (Bovine).